The chain runs to 393 residues: S-adenosylmethionine synthase 2 (393 aa).

A Mg(2+)-binding site is contributed by E9. Position 15 (H15) interacts with ATP. A K(+)-binding site is contributed by E43. Residues E56 and Q99 each coordinate L-methionine. Residues D167–K169, S235–F238, D246, R252–M253, A269, K273, and K277 contribute to the ATP site. D246 contributes to the L-methionine binding site. K277 lines the L-methionine pocket.

This sequence belongs to the AdoMet synthase family. As to quaternary structure, homotetramer. The cofactor is Mn(2+). Mg(2+) serves as cofactor. Co(2+) is required as a cofactor. Requires K(+) as cofactor.

Its subcellular location is the cytoplasm. The catalysed reaction is L-methionine + ATP + H2O = S-adenosyl-L-methionine + phosphate + diphosphate. Its pathway is amino-acid biosynthesis; S-adenosyl-L-methionine biosynthesis; S-adenosyl-L-methionine from L-methionine: step 1/1. Catalyzes the formation of S-adenosylmethionine from methionine and ATP. The reaction comprises two steps that are both catalyzed by the same enzyme: formation of S-adenosylmethionine (AdoMet) and triphosphate, and subsequent hydrolysis of the triphosphate. The polypeptide is S-adenosylmethionine synthase 2 (SAMS2) (Daucus carota (Wild carrot)).